The following is a 313-amino-acid chain: 4-diphosphocytidyl-2-C-methyl-D-erythritol kinase (313 aa).

The active site involves Lys29. Residue 113 to 123 coordinates ATP; sequence PMGGGVGGGSS. Asp155 is an active-site residue.

It belongs to the GHMP kinase family. IspE subfamily.

The catalysed reaction is 4-CDP-2-C-methyl-D-erythritol + ATP = 4-CDP-2-C-methyl-D-erythritol 2-phosphate + ADP + H(+). Its pathway is isoprenoid biosynthesis; isopentenyl diphosphate biosynthesis via DXP pathway; isopentenyl diphosphate from 1-deoxy-D-xylulose 5-phosphate: step 3/6. Its function is as follows. Catalyzes the phosphorylation of the position 2 hydroxy group of 4-diphosphocytidyl-2C-methyl-D-erythritol. This is 4-diphosphocytidyl-2-C-methyl-D-erythritol kinase from Haemophilus influenzae (strain 86-028NP).